The following is a 320-amino-acid chain: Ribose-phosphate pyrophosphokinase 1 (320 aa).

Residues 39-41 (DGE) and 98-99 (RQ) each bind ATP. Residues H132 and D173 each contribute to the Mg(2+) site. The active site involves K196. D-ribose 5-phosphate is bound by residues R198, D224, and 228–232 (DTAGT).

The protein belongs to the ribose-phosphate pyrophosphokinase family. Class I subfamily. In terms of assembly, homohexamer. Requires Mg(2+) as cofactor.

The protein resides in the cytoplasm. It carries out the reaction D-ribose 5-phosphate + ATP = 5-phospho-alpha-D-ribose 1-diphosphate + AMP + H(+). It participates in metabolic intermediate biosynthesis; 5-phospho-alpha-D-ribose 1-diphosphate biosynthesis; 5-phospho-alpha-D-ribose 1-diphosphate from D-ribose 5-phosphate (route I): step 1/1. Functionally, involved in the biosynthesis of the central metabolite phospho-alpha-D-ribosyl-1-pyrophosphate (PRPP) via the transfer of pyrophosphoryl group from ATP to 1-hydroxyl of ribose-5-phosphate (Rib-5-P). The protein is Ribose-phosphate pyrophosphokinase 1 of Streptococcus pyogenes serotype M1.